The sequence spans 210 residues: 3,4-dihydroxy-2-butanone 4-phosphate synthase (210 aa).

Residues 33 to 34 (RE), Asp-38, 146 to 150 (RRGHT), and Glu-170 each bind D-ribulose 5-phosphate. Position 34 (Glu-34) interacts with Mg(2+). Residue His-149 participates in Mg(2+) binding.

This sequence belongs to the DHBP synthase family. As to quaternary structure, homodimer. Mg(2+) serves as cofactor. It depends on Mn(2+) as a cofactor.

It carries out the reaction D-ribulose 5-phosphate = (2S)-2-hydroxy-3-oxobutyl phosphate + formate + H(+). Its pathway is cofactor biosynthesis; riboflavin biosynthesis; 2-hydroxy-3-oxobutyl phosphate from D-ribulose 5-phosphate: step 1/1. In terms of biological role, catalyzes the conversion of D-ribulose 5-phosphate to formate and 3,4-dihydroxy-2-butanone 4-phosphate. The polypeptide is 3,4-dihydroxy-2-butanone 4-phosphate synthase (Chromobacterium violaceum (strain ATCC 12472 / DSM 30191 / JCM 1249 / CCUG 213 / NBRC 12614 / NCIMB 9131 / NCTC 9757 / MK)).